The primary structure comprises 347 residues: Protein RecA (347 aa).

Residue 64–71 coordinates ATP; it reads GPESSGKT. Residues 328–347 form a disordered region; sequence DKVDEDKTEEEASQESLDLK.

The protein belongs to the RecA family.

It localises to the cytoplasm. Functionally, can catalyze the hydrolysis of ATP in the presence of single-stranded DNA, the ATP-dependent uptake of single-stranded DNA by duplex DNA, and the ATP-dependent hybridization of homologous single-stranded DNAs. It interacts with LexA causing its activation and leading to its autocatalytic cleavage. This is Protein RecA from Oceanobacillus iheyensis (strain DSM 14371 / CIP 107618 / JCM 11309 / KCTC 3954 / HTE831).